Reading from the N-terminus, the 92-residue chain is MKPRATSSHGYKAQGNKALNGALTSKKKVSKNQVVFFDYRDERKLKRFINDQGKIIPRRITGLSAKEQNLLTHSVKWARFLAVIPYVVDEYK.

It belongs to the bacterial ribosomal protein bS18 family. In terms of assembly, part of the 30S ribosomal subunit. Forms a tight heterodimer with protein bS6.

In terms of biological role, binds as a heterodimer with protein bS6 to the central domain of the 16S rRNA, where it helps stabilize the platform of the 30S subunit. The polypeptide is Small ribosomal subunit protein bS18 (Chlorobium chlorochromatii (strain CaD3)).